Reading from the N-terminus, the 1548-residue chain is Multidrug resistance protein (1548 aa).

The Cytoplasmic portion of the chain corresponds to 1-238; that stretch reads MVDNGHVTIA…YHVWAQILPK (238 aa). The ABC transmembrane type-1 1 domain occupies 231–514; that stretch reads VWAQILPKLL…IPIIISSILQ (284 aa). A helical transmembrane segment spans residues 239-256; it reads LLSDVTALMLPVLLEYFV. Residue Asn-263 is glycosylated (N-linked (GlcNAc...) asparagine). Helical transmembrane passes span 266-287, 349-367, 375-392, 463-480, and 500-519; these read WGWG…SCSA, VMYF…LLLI, VPGM…AVIS, ATPT…HVSG, and VSFF…FVSA. Residues 520-932 are Cytoplasmic-facing; that stretch reads KRVTAFIECP…PWSTYVAYLK (413 aa). The ABC transporter 1 domain occupies 634–855; that stretch reads VEEGDREYYQ…ALEETLRGEL (222 aa). 667–674 serves as a coordination point for ATP; the sequence is GSTGSGKS. Transmembrane regions (helical) follow at residues 933-950, 975-993, 1051-1070, and 1072-1088; these read SCGG…FALT, TYLY…GSPL, GYLY…IIMV, and VQPF…YSYY. Residues 940-1221 enclose the ABC transmembrane type-1 2 domain; it reads WGCLLATFAL…LVRQVAMVEA (282 aa). Asn-1095 and Asn-1154 each carry an N-linked (GlcNAc...) asparagine glycan. A run of 2 helical transmembrane segments spans residues 1164 to 1182 and 1186 to 1205; these read LEFL…GVIG and GASS…SMTL. Topologically, residues 1206-1548 are cytoplasmic; the sequence is TETLNWLVRQ…RIVQPAVLSD (343 aa). The ABC transporter 2 domain occupies 1286–1521; sequence LVLEGVQMRY…HQSMFHSMVE (236 aa). Residue 1320–1327 participates in ATP binding; it reads GRTGSGKS.

The protein belongs to the ABC transporter superfamily. ABCB family. Multidrug resistance exporter (TC 3.A.1.201) subfamily.

The protein localises to the membrane. It carries out the reaction ATP + H2O + xenobioticSide 1 = ADP + phosphate + xenobioticSide 2.. The chain is Multidrug resistance protein (PGPA) from Leishmania tarentolae (Sauroleishmania tarentolae).